A 54-amino-acid polypeptide reads, in one-letter code: Secreted virulence factor MC69 (54 aa).

The signal sequence occupies residues 1 to 18; it reads MKFTLALLTTLCASLASA. An intrachain disulfide couples Cys38 to Cys48.

The protein belongs to the MC69 virulence factor family.

It is found in the secreted. Its function is as follows. Secreted protein required for appressorial penetration of intact host epidermal cells and for pathogenicity. This Colletotrichum orbiculare (strain 104-T / ATCC 96160 / CBS 514.97 / LARS 414 / MAFF 240422) (Cucumber anthracnose fungus) protein is Secreted virulence factor MC69.